The chain runs to 549 residues: Cation/acetate symporter ActP (549 aa).

The next 13 helical transmembrane spans lie at 33–53 (WQAIIMFLIFVLLTLYITYWA), 76–96 (GLAIAGDFMSAASFLGISALV), 103–123 (GLIYSLGFLVGWPIILFLIAE), 149–169 (LSACGSLVVVALYLIAQMVGA), 183–203 (IAVVLVGVLMVMYVLFGGMLA), 206–226 (WVQIIKAVLLLFGASFMAFMV), 262–282 (ISALSLGLGLMFGTAGLPHIL), 303–323 (GFMGYFYILTFIIGFGAIMLV), 355–375 (LFLGFISAVAFATILAVVAGL), 404–424 (VSKITVLILGVVAILLGILFE), 428–448 (IAFMVGLAFSIAASCNFPIIL), 463–483 (IGGWLGLLTAVILMVLGPTIW), and 493–513 (IFPYEYPALFSIAVAFIGIWF).

It belongs to the sodium:solute symporter (SSF) (TC 2.A.21) family.

It localises to the cell inner membrane. Functionally, transports acetate. The chain is Cation/acetate symporter ActP from Enterobacter sp. (strain 638).